The chain runs to 548 residues: Probable bifunctional tRNA threonylcarbamoyladenosine biosynthesis protein (548 aa).

The interval 1–338 (MRILGIEGTA…FRPDEVAVTW (338 aa)) is kae1. Residues His-122 and His-126 each coordinate Fe cation. L-threonylcarbamoyladenylate is bound by residues 143–147 (NASGA), Asp-175, Gly-188, Glu-192, and Asn-271. Asp-299 contributes to the Fe cation binding site. A Protein kinase domain is found at 349–548 (RMGGDEVQGA…DDIEGRGRYQ (200 aa)). Residues 355-362 (VQGAEATV) and Lys-371 each bind ATP. Residues 390-404 (ERTRQEARLTSEARR) show a composition bias toward basic and acidic residues. Positions 390-413 (ERTRQEARLTSEARRNGVPTPLVR) are disordered. The active-site Proton acceptor; for kinase activity is the Asp-460.

It in the N-terminal section; belongs to the KAE1 / TsaD family. The protein in the C-terminal section; belongs to the protein kinase superfamily. Tyr protein kinase family. BUD32 subfamily. In terms of assembly, component of the KEOPS complex that consists of Kae1, Bud32, Cgi121 and Pcc1; the whole complex dimerizes. Fe(2+) serves as cofactor.

The protein resides in the cytoplasm. It carries out the reaction L-seryl-[protein] + ATP = O-phospho-L-seryl-[protein] + ADP + H(+). It catalyses the reaction L-threonyl-[protein] + ATP = O-phospho-L-threonyl-[protein] + ADP + H(+). The enzyme catalyses L-threonylcarbamoyladenylate + adenosine(37) in tRNA = N(6)-L-threonylcarbamoyladenosine(37) in tRNA + AMP + H(+). Required for the formation of a threonylcarbamoyl group on adenosine at position 37 (t(6)A37) in tRNAs that read codons beginning with adenine. Is a component of the KEOPS complex that is probably involved in the transfer of the threonylcarbamoyl moiety of threonylcarbamoyl-AMP (TC-AMP) to the N6 group of A37. The Kae1 domain likely plays a direct catalytic role in this reaction. The Bud32 domain probably displays kinase activity that regulates Kae1 function. This is Probable bifunctional tRNA threonylcarbamoyladenosine biosynthesis protein from Haloarcula marismortui (strain ATCC 43049 / DSM 3752 / JCM 8966 / VKM B-1809) (Halobacterium marismortui).